A 312-amino-acid chain; its full sequence is Ankyrin repeat family A protein 2 (312 aa).

ANK repeat units lie at residues 147 to 179, 180 to 212, 213 to 245, 246 to 278, and 279 to 312; these read ANSL…HTDE, EGFT…LLGK, GRES…EYDW, NGGT…IETD, and SGYN…NIRE.

Interacts (via ANK repeats) with CCDC8 (via PxLPxI/L motif); mediates the interaction with the 3M complex which is composed of CCDC8, CUL7 and OBSL1. Interacts (via ANK repeats) with HDAC4 (via PxLPxI/L motif). Interacts (via ANK repeats) with HDAC5 (via PxLPxI/L motif). Interacts (via ANK repeats) with LRP2/megalin (via PxLPxI/L motif). Interacts (via ANK repeats) with RFX7 (via PxLPxI/L motif). Interacts with AHRR. Interacts with NEK6.

It is found in the cytoplasm. Its subcellular location is the cytoskeleton. It localises to the membrane. Its function is as follows. May regulate the interaction between the 3M complex and the histone deacetylases HDAC4 and HDAC5. May also regulate LRP2/megalin. This is Ankyrin repeat family A protein 2 (Ankra2) from Mus musculus (Mouse).